The sequence spans 65 residues: Hirudin-3B' (65 aa).

The interval 1-3 is interaction with thrombin active site; that stretch reads VVY. Disulfide bonds link Cys-6-Cys-14, Cys-16-Cys-28, and Cys-22-Cys-39. The tract at residues 40-65 is disordered; that stretch reads VTGEGTPKPQSHNDGDFEEIPEEYLQ. O-linked (GalNAc...) threonine glycosylation occurs at Thr-45. The segment at 55-65 is interaction with fibrinogen-binding exosite of thrombin; sequence DFEEIPEEYLQ. A compositionally biased stretch (acidic residues) spans 55–65; it reads DFEEIPEEYLQ. Tyr-63 bears the Sulfotyrosine mark.

This sequence belongs to the protease inhibitor I14 (hirudin) family.

Its subcellular location is the secreted. In terms of biological role, hirudin is a potent thrombin-specific protease inhibitor. It forms a stable non-covalent complex with alpha-thrombin, thereby abolishing its ability to cleave fibrinogen. This chain is Hirudin-3B', found in Hirudo medicinalis (Medicinal leech).